Consider the following 296-residue polypeptide: Magnetosome protein MamB (296 aa).

Residues 1-12 (MKFENCRDCREE) are Cytoplasmic-facing. Positions 1 to 214 (MKFENCRDCR…GLMDSSVDTE (214 aa)) are transmembrane domain (TMD). The helical transmembrane segment at 13–33 (VVWWAFTADICMTLFKGVLGL) threads the bilayer. Residues 34 to 83 (MSGSVALVADSLHSGADVVASGVTQLSLKISNKPADERYPFGYGNIQYIS) are Lumenal-facing. Residues 84 to 104 (SSIVGSLLLIGASFLMYGSVM) form a helical membrane-spanning segment. Over 105 to 112 (KLISGTYE) the chain is Cytoplasmic. The helical transmembrane segment at 113–133 (APSIFAAVGASVTVIVNELMY) threads the bilayer. At 134-164 (RYQICVGNENNSPAIIANAWDNRSDAISSAA) the chain is on the lumenal side. The helical transmembrane segment at 165 to 185 (VMVGVIASVIGFPIADTIAAI) threads the bilayer. At 186-296 (GVSALVGRIG…SPAPAAAARA (111 aa)) the chain is on the cytoplasmic side. The C-terminal domain (CTD) stretch occupies residues 215-296 (LLQTAWQVAM…SPAPAAAARA (82 aa)).

Belongs to the cation diffusion facilitator (CDF) transporter (TC 2.A.4) family. In terms of assembly, forms heterodimers with MamM. Probably interacts with MamE.

The protein resides in the magnetosome membrane. Plays a dual, essential role in magnetosome formation; required for magnetosome vesicle formation as well as biomineralization. Probably binds and transports iron. Requires heterodimerization with MamM for stability. The chain is Magnetosome protein MamB (mamB) from Paramagnetospirillum magneticum (strain ATCC 700264 / AMB-1) (Magnetospirillum magneticum).